The chain runs to 145 residues: Large ribosomal subunit protein uL13 (145 aa).

This sequence belongs to the universal ribosomal protein uL13 family. As to quaternary structure, part of the 50S ribosomal subunit.

Its function is as follows. This protein is one of the early assembly proteins of the 50S ribosomal subunit, although it is not seen to bind rRNA by itself. It is important during the early stages of 50S assembly. The chain is Large ribosomal subunit protein uL13 from Bacillus cereus (strain G9842).